The following is an 872-amino-acid chain: Alanine--tRNA ligase (872 aa).

Zn(2+) is bound by residues H567, H571, C669, and H673.

This sequence belongs to the class-II aminoacyl-tRNA synthetase family. Zn(2+) serves as cofactor.

The protein localises to the cytoplasm. It catalyses the reaction tRNA(Ala) + L-alanine + ATP = L-alanyl-tRNA(Ala) + AMP + diphosphate. Functionally, catalyzes the attachment of alanine to tRNA(Ala) in a two-step reaction: alanine is first activated by ATP to form Ala-AMP and then transferred to the acceptor end of tRNA(Ala). Also edits incorrectly charged Ser-tRNA(Ala) and Gly-tRNA(Ala) via its editing domain. The polypeptide is Alanine--tRNA ligase (Streptococcus thermophilus (strain ATCC BAA-491 / LMD-9)).